The following is a 549-amino-acid chain: Cytoplasmic trehalase (549 aa).

Substrate is bound by residues arginine 168, 175 to 176 (WD), asparagine 212, 221 to 223 (RSQ), 292 to 294 (RDE), and glycine 324. Residues aspartate 326 and glutamate 509 each act as proton donor/acceptor in the active site. Glutamate 525 lines the substrate pocket.

The protein belongs to the glycosyl hydrolase 37 family. In terms of assembly, monomer.

It localises to the cytoplasm. The enzyme catalyses alpha,alpha-trehalose + H2O = alpha-D-glucose + beta-D-glucose. Its pathway is glycan degradation; trehalose degradation; D-glucose from alpha,alpha-trehalose: step 1/1. Functionally, hydrolyzes trehalose to glucose. Could be involved, in cells returning to low osmolarity conditions, in the utilization of the accumulated cytoplasmic trehalose, which was synthesized in response to high osmolarity. The protein is Cytoplasmic trehalase of Salmonella schwarzengrund (strain CVM19633).